Consider the following 323-residue polypeptide: Phospho-N-acetylmuramoyl-pentapeptide-transferase (323 aa).

9 helical membrane-spanning segments follow: residues 12-32, 58-78, 84-104, 120-140, 151-171, 177-197, 200-220, 229-250, and 303-323; these read IVMA…IIIP, PTIG…IMVG, AMIA…DDLL, MILL…YIGT, INFG…VTNA, GLDG…GIIS, LGHI…LAFL, VFMG…ALIL, and KIVS…FASL.

This sequence belongs to the glycosyltransferase 4 family. MraY subfamily. Mg(2+) is required as a cofactor.

It localises to the cell membrane. The catalysed reaction is UDP-N-acetyl-alpha-D-muramoyl-L-alanyl-gamma-D-glutamyl-meso-2,6-diaminopimeloyl-D-alanyl-D-alanine + di-trans,octa-cis-undecaprenyl phosphate = di-trans,octa-cis-undecaprenyl diphospho-N-acetyl-alpha-D-muramoyl-L-alanyl-D-glutamyl-meso-2,6-diaminopimeloyl-D-alanyl-D-alanine + UMP. It functions in the pathway cell wall biogenesis; peptidoglycan biosynthesis. In terms of biological role, catalyzes the initial step of the lipid cycle reactions in the biosynthesis of the cell wall peptidoglycan: transfers peptidoglycan precursor phospho-MurNAc-pentapeptide from UDP-MurNAc-pentapeptide onto the lipid carrier undecaprenyl phosphate, yielding undecaprenyl-pyrophosphoryl-MurNAc-pentapeptide, known as lipid I. This Clostridium perfringens (strain ATCC 13124 / DSM 756 / JCM 1290 / NCIMB 6125 / NCTC 8237 / Type A) protein is Phospho-N-acetylmuramoyl-pentapeptide-transferase.